The sequence spans 1127 residues: E3 ubiquitin-protein ligase TRIM33 (1127 aa).

Positions 1 to 18 (MAENKGGGEAESGGGGSG) are enriched in gly residues. The segment at 1-118 (MAENKGGGEA…PSAGPPPGPP (118 aa)) is disordered. Residues 1-147 (MAENKGGGEA…AEPKLLPCLH (147 aa)) form a necessary for E3 ubiquitin-protein ligase activity and repression of SMAD4 signaling and transcriptional repression region. Positions 19–37 (SAPVTAGAAGPAAQEAEPP) are enriched in low complexity. Gly residues predominate over residues 52–64 (RAGAEGGAAGPDD). Over residues 65–97 (GGVAAASSGSAQAASSPAASVGTGVAGGAVSTP) the composition is skewed to low complexity. Residues 98–118 (APAPASAPAPGPSAGPPPGPP) show a composition bias toward pro residues. The RING-type zinc-finger motif lies at 125–154 (CAVCQQSLQSRREAEPKLLPCLHSFCLRCL). 2 consecutive B box-type zinc fingers follow at residues 212–259 (KSEQ…IRKK) and 271–312 (QRPV…YQFL). Cys-217, Cys-220, Cys-241, His-245, Cys-276, His-279, Cys-299, and His-304 together coordinate Zn(2+). The tract at residues 299–401 (CQLLEHKEHR…QMKLLQQQND (103 aa)) is necessary for oligomerization. Residues 299 to 401 (CQLLEHKEHR…QMKLLQQQND (103 aa)) adopt a coiled-coil conformation. Glycyl lysine isopeptide (Lys-Gly) (interchain with G-Cter in SUMO2) cross-links involve residues Lys-329, Lys-334, Lys-481, and Lys-504. Residue Arg-515 is modified to Asymmetric dimethylarginine; alternate. Position 515 is an omega-N-methylarginine; alternate (Arg-515). A Glycyl lysine isopeptide (Lys-Gly) (interchain with G-Cter in SUMO2) cross-link involves residue Lys-527. Omega-N-methylarginine is present on Arg-535. Positions 536-563 (MQQPPAPVPTTTTTTQQHPRQAAPQMLQ) are disordered. Arg-577 bears the Asymmetric dimethylarginine mark. At Arg-591 the chain carries Asymmetric dimethylarginine; alternate. Residue Arg-591 is modified to Omega-N-methylarginine; alternate. An asymmetric dimethylarginine mark is found at Arg-598 and Arg-604. Disordered stretches follow at residues 608 to 629 (PQYS…HAGP), 673 to 692 (NPEN…EDAG), and 703 to 818 (YISG…TPPL). Over residues 723–759 (PSALSPGSSGLSNSHTPVRPPSTSSTGSRGSCGSSGR) the composition is skewed to low complexity. An N6-acetyllysine; alternate mark is found at Lys-763 and Lys-769. Residues Lys-763 and Lys-769 each participate in a glycyl lysine isopeptide (Lys-Gly) (interchain with G-Cter in SUMO2); alternate cross-link. Lys-774 participates in a covalent cross-link: Glycyl lysine isopeptide (Lys-Gly) (interchain with G-Cter in SUMO2). Glycyl lysine isopeptide (Lys-Gly) (interchain with G-Cter in SUMO2); alternate cross-links involve residues Lys-776 and Lys-793. Glycyl lysine isopeptide (Lys-Gly) (interchain with G-Cter in SUMO1); alternate cross-links involve residues Lys-776 and Lys-793. Lys-793 bears the N6-acetyllysine; alternate mark. Over residues 793–802 (KQEKTEDGRR) the composition is skewed to basic and acidic residues. Lys-796 is covalently cross-linked (Glycyl lysine isopeptide (Lys-Gly) (interchain with G-Cter in SUMO2)). A Phosphoserine modification is found at Ser-803. Over residues 807–818 (LSSPESSLTPPL) the composition is skewed to low complexity. Thr-815 carries the post-translational modification Phosphothreonine. A Glycyl lysine isopeptide (Lys-Gly) (interchain with G-Cter in SUMO2) cross-link involves residue Lys-861. Residue Ser-862 is modified to Phosphoserine. The segment at 887 to 934 (EDWCAVCQNGGDLLCCEKCPKVFHLTCHVPTLLSFPSGDWICTFCRDI) adopts a PHD-type zinc-finger fold. At Lys-951 the chain carries N6-acetyllysine. An N6-acetyllysine; alternate modification is found at Lys-953. Residue Lys-953 forms a Glycyl lysine isopeptide (Lys-Gly) (interchain with G-Cter in SUMO2); alternate linkage. Residues 957-1080 (GLSPVDQRKC…LYFEDKLTEI (124 aa)) form the Bromo domain. Glycyl lysine isopeptide (Lys-Gly) (interchain with G-Cter in SUMO2) cross-links involve residues Lys-1007 and Lys-1043. At Thr-1051 the chain carries Phosphothreonine. Residue Lys-1057 forms a Glycyl lysine isopeptide (Lys-Gly) (interchain with G-Cter in SUMO2) linkage. The tract at residues 1088-1127 (PLPEFEQEEDDGEVTEDSDEDFIQPRRKRLKSDERPVHIK) is disordered. Residues 1092–1109 (FEQEEDDGEVTEDSDEDF) show a composition bias toward acidic residues. Thr-1102 bears the Phosphothreonine mark. Ser-1105 is subject to Phosphoserine. Lys-1118 participates in a covalent cross-link: Glycyl lysine isopeptide (Lys-Gly) (interchain with G-Cter in SUMO2). The span at 1118 to 1127 (KSDERPVHIK) shows a compositional bias: basic and acidic residues. The residue at position 1119 (Ser-1119) is a Phosphoserine.

Belongs to the TRIM/RBCC family. As to quaternary structure, homooligomer and heterooligomer with TRIM24 and TRIM28 family members. Interacts with SMAD4 in unstimulated cells. Found in a complex with SMAD2 and SMAD3 upon addition of TGF-beta. Interacts with SMAD2 and SMAD3. Interacts with SMAD4 under basal and induced conditions and, upon TGF-beta signaling, with activated SMAD2. Forms a ternary complex with SMAD4 and SMAD2 upon TGF-beta signaling. In terms of processing, sumoylated with SUMO1. In terms of tissue distribution, expressed in stem cells at the bottom of the crypts of the colon (at protein level). Expressed in colon adenomas and adenocarcinomas (at protein level). Expressed in brain, lung, liver, spleen, thymus, prostate, kidney, testis, heart, placenta, pancreas, small intestine, ovary, colon, skeletal muscle and hematopoietic progenitors.

It is found in the nucleus. The enzyme catalyses S-ubiquitinyl-[E2 ubiquitin-conjugating enzyme]-L-cysteine + [acceptor protein]-L-lysine = [E2 ubiquitin-conjugating enzyme]-L-cysteine + N(6)-ubiquitinyl-[acceptor protein]-L-lysine.. It functions in the pathway protein modification; protein ubiquitination. Functionally, acts as an E3 ubiquitin-protein ligase. Promotes SMAD4 ubiquitination, nuclear exclusion and degradation via the ubiquitin proteasome pathway. According to PubMed:16751102, does not promote a decrease in the level of endogenous SMAD4. May act as a transcriptional repressor. Inhibits the transcriptional response to TGF-beta/BMP signaling cascade. Plays a role in the control of cell proliferation. Its association with SMAD2 and SMAD3 stimulates erythroid differentiation of hematopoietic stem/progenitor. Monoubiquitinates SMAD4 and acts as an inhibitor of SMAD4-dependent TGF-beta/BMP signaling cascade (Monoubiquitination of SMAD4 hampers its ability to form a stable complex with activated SMAD2/3 resulting in inhibition of TGF-beta/BMP signaling cascade). The chain is E3 ubiquitin-protein ligase TRIM33 (TRIM33) from Homo sapiens (Human).